A 238-amino-acid polypeptide reads, in one-letter code: Cysteine-rich venom protein pseudechetoxin-like (238 aa).

Residues 1 to 19 form the signal peptide; sequence MIAFIVLLSLAAVLQQSSG. Residues 20-28 constitute a propeptide that is removed on maturation; it reads TVDFASESS. The SCP domain maps to 38–164; that stretch reads VDKHNDLRRS…STKYLYVCQY (127 aa). Cystine bridges form between Cys-75-Cys-153, Cys-92-Cys-165, Cys-148-Cys-162, Cys-184-Cys-191, Cys-187-Cys-196, Cys-200-Cys-233, Cys-209-Cys-227, and Cys-218-Cys-231. One can recognise a ShKT domain in the interval 200–233; it reads CKHNDDLSNCKPLAKKSKCQTEWIKSKCPATCFC.

The protein belongs to the CRISP family. As to expression, expressed by the venom gland.

The protein resides in the secreted. Functionally, blocks olfactory (CNGA2) and retinal (CNGA1) CNG channel currents. Does not affect neither depolarization- nor caffeine-induced contraction of smooth muscle. This is Cysteine-rich venom protein pseudechetoxin-like from Oxyuranus microlepidotus (Inland taipan).